The primary structure comprises 921 residues: Isoleucine--tRNA ligase 1 (921 aa).

A 'HIGH' region motif is present at residues 57 to 67 (PYANGDIHMGH). E552 is a binding site for L-isoleucyl-5'-AMP. A 'KMSKS' region motif is present at residues 593 to 597 (KMSKS). K596 is a binding site for ATP. Zn(2+)-binding residues include C888, C891, C908, and C911.

It belongs to the class-I aminoacyl-tRNA synthetase family. IleS type 1 subfamily. As to quaternary structure, monomer. The cofactor is Zn(2+).

It localises to the cytoplasm. The catalysed reaction is tRNA(Ile) + L-isoleucine + ATP = L-isoleucyl-tRNA(Ile) + AMP + diphosphate. Catalyzes the attachment of isoleucine to tRNA(Ile). As IleRS can inadvertently accommodate and process structurally similar amino acids such as valine, to avoid such errors it has two additional distinct tRNA(Ile)-dependent editing activities. One activity is designated as 'pretransfer' editing and involves the hydrolysis of activated Val-AMP. The other activity is designated 'posttransfer' editing and involves deacylation of mischarged Val-tRNA(Ile). This is Isoleucine--tRNA ligase 1 from Bacillus cereus (strain ATCC 10987 / NRS 248).